A 262-amino-acid polypeptide reads, in one-letter code: Snake venom serine proteinase 1 (262 aa).

The first 18 residues, Met1–Ala18, serve as a signal peptide directing secretion. Positions Gln19–Leu24 are excised as a propeptide. Residues Val25–Ala253 enclose the Peptidase S1 domain. Cystine bridges form between Cys31–Cys165, Cys52–Cys68, Cys144–Cys214, Cys176–Cys193, and Cys204–Cys229. Residue His67 is the Charge relay system of the active site. A glycan (N-linked (GlcNAc...) asparagine) is linked at Asn105. Residue Asp112 is the Charge relay system of the active site. Ser208 serves as the catalytic Charge relay system.

It belongs to the peptidase S1 family. Snake venom subfamily. In terms of assembly, monomer. Expressed by the venom gland.

It localises to the secreted. In terms of biological role, snake venom serine protease that may act in the hemostasis system of the prey. This chain is Snake venom serine proteinase 1, found in Crotalus adamanteus (Eastern diamondback rattlesnake).